We begin with the raw amino-acid sequence, 614 residues long: Vitamin B12 transporter BtuB (614 aa).

A signal peptide spans 1 to 20 (MIKKASLLTACSVTAFSAWA). The TonB box signature appears at 26-33 (DTLVVTAN). The TBDR plug domain occupies 38 to 152 (PRSTVLAPTT…IGGVVNIITT (115 aa)). Residues Leu-83, Ser-85, Asn-92, and 110-111 (VS) contribute to the cyanocob(III)alamin site. The TBDR beta-barrel domain occupies 155–614 (HPGTEISAGW…EYTLSGSYTF (460 aa)). 3 consecutive transmembrane segments (beta stranded) span residues 158 to 165 (TEISAGWG), 169 to 178 (YQNYDVSTQQ), and 184 to 195 (TRVTLLGDYAHT). Residues Asp-199, Gln-211, Asp-213, and Asp-215 each contribute to the Ca(2+) site. A run of 2 beta stranded transmembrane segments spans residues 217–227 (FLSKTLYGALE) and 232–248 (DVWS…NRTN). Ca(2+)-binding residues include Tyr-249 and Asp-250. Ala-251 serves as a coordination point for cyanocob(III)alamin. Asp-261 contacts Ca(2+). 14 beta stranded membrane passes run 263 to 277 (RKLY…LRYN), 279 to 296 (ELIK…KDYN), 309 to 325 (TLDE…NNII), 328 to 337 (HGNIGAGVDW), 353 to 369 (YDQR…QQVG), 371 to 381 (FTFEGAGRSDD), 385 to 400 (FGRH…WEFI), 403 to 417 (YRFI…KAPN), 434 to 443 (KSKQWEGAFE), 449 to 458 (VNWRISGYRN), 473 to 490 (YYNE…TANF), 494 to 509 (PLTH…ARNA), 517 to 529 (RRAK…QLDW), and 535 to 550 (DWGI…YDKD). Residue Thr-309 coordinates cyanocob(III)alamin. Arg-517 is a cyanocob(III)alamin binding site. Tyr-551 serves as a coordination point for cyanocob(III)alamin. The next 3 beta stranded transmembrane spans lie at 558 to 572 (TVKM…LAVA), 585 to 596 (IANLFDKDYETV), and 602 to 614 (AGRE…SYTF). The TonB C-terminal box motif lies at 597 to 614 (YGYQTAGREYTLSGSYTF).

The protein belongs to the TonB-dependent receptor family. BtuB (TC 1.B.14.3.1) subfamily.

The protein resides in the cell outer membrane. Its function is as follows. Involved in the active translocation of vitamin B12 (cyanocobalamin) across the outer membrane to the periplasmic space. It derives its energy for transport by interacting with the trans-periplasmic membrane protein TonB. This chain is Vitamin B12 transporter BtuB, found in Escherichia coli O6:K15:H31 (strain 536 / UPEC).